A 164-amino-acid polypeptide reads, in one-letter code: uncharacterized protein (164 aa).

CBS domains follow at residues 9-66 (ATTK…DIDS) and 72-128 (MTKD…VHTM).

This is an uncharacterized protein from Acidianus ambivalens (Desulfurolobus ambivalens).